The sequence spans 399 residues: S-adenosylmethionine synthase (399 aa).

H17 contributes to the ATP binding site. D19 serves as a coordination point for Mg(2+). E45 is a binding site for K(+). Residues E58 and Q101 each contribute to the L-methionine site. The flexible loop stretch occupies residues 101 to 111; sequence QSADIAMGVDQ. ATP is bound by residues 177-179, 244-245, D253, 259-260, A276, and K280; these read DGK, RF, and RK. An L-methionine-binding site is contributed by D253. K284 lines the L-methionine pocket.

The protein belongs to the AdoMet synthase family. In terms of assembly, homotetramer; dimer of dimers. The cofactor is Mg(2+). It depends on K(+) as a cofactor.

It is found in the cytoplasm. The enzyme catalyses L-methionine + ATP + H2O = S-adenosyl-L-methionine + phosphate + diphosphate. Its pathway is amino-acid biosynthesis; S-adenosyl-L-methionine biosynthesis; S-adenosyl-L-methionine from L-methionine: step 1/1. Its function is as follows. Catalyzes the formation of S-adenosylmethionine (AdoMet) from methionine and ATP. The overall synthetic reaction is composed of two sequential steps, AdoMet formation and the subsequent tripolyphosphate hydrolysis which occurs prior to release of AdoMet from the enzyme. This is S-adenosylmethionine synthase from Bacillus cereus (strain B4264).